Here is a 781-residue protein sequence, read N- to C-terminus: Pyrin (781 aa).

The Pyrin domain occupies 1–92; sequence MAKTPSDHLL…AEELHRAAIQ (92 aa). Polar residues predominate over residues 93–111; that stretch reads EYSTQENGTDDSAASSSLG. Positions 93 to 226 are disordered; the sequence is EYSTQENGTD…AGGAPGQKEC (134 aa). Residues 113 to 126 are compositionally biased toward basic and acidic residues; it reads NKPRSLKTPDHPEG. Residues 153-163 are compositionally biased toward basic residues; the sequence is LSRKPLSKRRE. Phosphoserine is present on Ser242. Residues 266–280 are interaction with RELA; it reads KTAANLDSATEPRAR. 2 disordered regions span residues 270–322 and 336–373; these read NLDS…EGDP and EAVS…QPLP. A B box-type zinc finger spans residues 370 to 412; it reads QPLPQCKRHLKQVQLLFCEDHDEPICLICSLSQEHQGHRVRPI. Residues 413-442 adopt a coiled-coil conformation; sequence EEVALEHKKKIQKQLEHLKKLRKSGEEQRS. The Nuclear localization signal signature appears at 420 to 437; the sequence is KKKIQKQLEHLKKLRKSG. Residues 420–582 are required for homotrimerization and induction of pyroptosomes; the sequence is KKKIQKQLEH…YFSETLRSEM (163 aa). One can recognise a B30.2/SPRY domain in the interval 580–775; that stretch reads SEMEMFNVPE…NTAPLTICPV (196 aa).

In terms of assembly, homotrimer. Interacts (via the B box-type zinc finger) with PSTPIP1. Interacts (via the B30.2/SPRY domain) with several components of the inflammasome complex, including CASP1 p20 and p10 subunits, CASP5, PYCARD, NLRP1, NLRP2 and NLRP3, as well as with unprocessed IL1B; this interaction may lead to autophagic degradation of these proteins. Component of the AIM2 PANoptosome complex, a multiprotein complex that drives inflammatory cell death (PANoptosis). Interacts with NFKBIA and RELA. Interacts weakly with VASP and ACTR3. Interacts with active ULK1 (phosphorylated on 'Ser-317') and BECN1 simultaneously. Also interacts with ATG16L1 (via WD repeats), and with ATG8 family members, including GABARAP, GABARAPL1 and, to a lesser extent, GABARAPL2, MAP1LC3A/LC3A and MAP1LC3C/LC3C. Interacts with TRIM21. Interacts with YWHAB, YWHAE, YWHAG, YWHAH, YWHAQ and YWHAZ; the interaction is required for the down-regulation of pyrin pro-inflammatory activity. Post-translationally, cleaved by CASP1. The N-terminal cleavage product localizes to the nucleus as a filamentous network and to the cytoplasm, interacts more strongly with RELA and NFKBIA than the full-length protein, enhances the nuclear localization of RELA and induces NFKBIA proteolysis. The C-terminal cleavage product localizes to the cytoplasm. In terms of processing, phosphorylation at Ser-242 is required for the interaction with 14-3-3 proteins and down-regulation of pyrin pro-inflammatory activity. Degraded along with the delivery of its substrates to autolysosomal compartments (at protein level). Expressed in peripheral blood leukocytes, particularly in mature granulocytes and to a lesser extent in monocytes but not in lymphocytes. Detected in spleen, lung and muscle, probably as a result of leukocyte infiltration in these tissues. Not expressed in thymus, prostate, testis, ovary, small intestine, colon, heart, brain, placenta, liver, kidney, pancreas. Expression detected in several myeloid leukemic, colon cancer, and prostate cancer cell lines.

The protein resides in the cytoplasm. It localises to the cytoskeleton. It is found in the cell projection. The protein localises to the ruffle. Its subcellular location is the lamellipodium. The protein resides in the nucleus. It localises to the cytoplasmic vesicle. It is found in the autophagosome. In terms of biological role, involved in the regulation of innate immunity and the inflammatory response in response to IFNG/IFN-gamma. Organizes autophagic machinery by serving as a platform for the assembly of ULK1, Beclin 1/BECN1, ATG16L1, and ATG8 family members and recognizes specific autophagy targets, thus coordinating target recognition with assembly of the autophagic apparatus and initiation of autophagy. Acts as an autophagy receptor for the degradation of several inflammasome components, including CASP1, NLRP1 and NLRP3, hence preventing excessive IL1B- and IL18-mediated inflammation. However, it can also have a positive effect in the inflammatory pathway, acting as an innate immune sensor that triggers PYCARD/ASC specks formation, caspase-1 activation, and IL1B and IL18 production. Together with AIM2, also acts as a mediator of pyroptosis, necroptosis and apoptosis (PANoptosis), an integral part of host defense against pathogens, in response to bacterial infection. It is required for PSTPIP1-induced PYCARD/ASC oligomerization and inflammasome formation. Recruits PSTPIP1 to inflammasomes, and is required for PSTPIP1 oligomerization. The chain is Pyrin from Homo sapiens (Human).